The primary structure comprises 333 residues: Nucleoid-associated protein (333 aa).

It belongs to the YejK family.

The protein localises to the cytoplasm. It localises to the nucleoid. This is Nucleoid-associated protein from Metapseudomonas resinovorans (Pseudomonas resinovorans).